Here is a 375-residue protein sequence, read N- to C-terminus: Putative glutamate--cysteine ligase 2 (375 aa).

Belongs to the glutamate--cysteine ligase type 2 family. YbdK subfamily.

The enzyme catalyses L-cysteine + L-glutamate + ATP = gamma-L-glutamyl-L-cysteine + ADP + phosphate + H(+). ATP-dependent carboxylate-amine ligase which exhibits weak glutamate--cysteine ligase activity. The protein is Putative glutamate--cysteine ligase 2 of Azoarcus sp. (strain BH72).